We begin with the raw amino-acid sequence, 665 residues long: Cyclic nucleotide-gated cation channel subunit A (665 aa).

The Cytoplasmic segment spans residues 1 to 110; sequence MRHFKVKAMV…DPTLQSHYRW (110 aa). Residues 111-131 traverse the membrane as a helical segment; it reads LAIVSLAVLYNIIFVVGRAVF. The Extracellular portion of the chain corresponds to 132-138; sequence WEINKSA. An N-linked (GlcNAc...) asparagine glycan is attached at N135. A helical transmembrane segment spans residues 139 to 159; the sequence is PAFWYTLDYLCDFIYLLDTLV. Residues 160-186 lie on the Cytoplasmic side of the membrane; sequence HMHEGFLDQGLLVRDAFRLRRHYFHTK. The chain crosses the membrane as a helical span at residues 187 to 207; it reads GWYLDVLSMLPTDLAYIWWPP. Over 208–253 the chain is Extracellular; that stretch reads ETCSSLYLPCPVIVRLNRLLRINRLWEWFDRTETATGYPNAFRICK. Residues 254–274 traverse the membrane as a helical segment; sequence VVLAILVLIHWNACMYFAISY. The Cytoplasmic segment spans residues 275–325; the sequence is EIGFSSDSWVYNLNGTRNNTLQRQYIYSFYWSTLTLTTIGETPTPENDVEY. Residues 326–346 form a helical membrane-spanning segment; it reads LFVVADFLAGVLIFATIVGNI. The Extracellular portion of the chain corresponds to 347 to 481; sequence GSMISNMNVA…GKLSVVGDDG (135 aa). 3',5'-cyclic GMP is bound by residues 437 to 559, E496, and R511; that span reads LLEA…DGLL. A helical membrane pass occupies residues 482 to 502; sequence ITVLATLGAGSVFGEVSVLEI. Topologically, residues 503–665 are cytoplasmic; it reads AGNRTGNRRT…SSDAAKQNTL (163 aa). Residues 633–665 form a disordered region; sequence RSGRLYSLQPKRRPRSRPDATAKSSDAAKQNTL. The span at 654–665 shows a compositional bias: polar residues; the sequence is AKSSDAAKQNTL.

This sequence belongs to the cyclic nucleotide-gated cation channel (TC 1.A.1.5) family. In terms of tissue distribution, expressed in antennae and the visual system.

Its subcellular location is the membrane. In terms of biological role, approximately 50-fold more sensitive to cGMP than to cAMP. May be involved in transduction cascades of both invertebrate photoreceptors and olfactory sensillae. This Drosophila melanogaster (Fruit fly) protein is Cyclic nucleotide-gated cation channel subunit A (CngA).